Here is a 1266-residue protein sequence, read N- to C-terminus: Rho GTPase-activating protein 29 (1266 aa).

Phosphoserine is present on residues Ser171, Ser176, Ser179, and Ser190. Residues 192-462 form the F-BAR domain; sequence IELDNLLLKN…SAKLYDPGQE (271 aa). Residues 296–418 are a coiled coil; the sequence is RKNEMEKQRK…EILTQLRTLV (123 aa). The disordered stretch occupies residues 482–501; that stretch reads NVNKQMTNSPQTSGYEPADS. Positions 483–495 are enriched in polar residues; it reads VNKQMTNSPQTSG. Ser501, Ser521, and Ser554 each carry phosphoserine. The span at 542–561 shows a compositional bias: low complexity; sequence DSESTGGSSESRSLDSESIS. A disordered region spans residues 542-601; it reads DSESTGGSSESRSLDSESISPGDFHRKLPRTPSSGTMSSADDLDEREPPSPSEAGPNSLG. The Phorbol-ester/DAG-type zinc-finger motif lies at 614-659; that stretch reads THKFRKLRSPTKCRDCDGIVMFPGVECEECLLVCHRKCLENLVIIC. The Rho-GAP domain maps to 673-888; sequence AEFIQVAKKE…FLITYSQKIF (216 aa). 3 positions are modified to phosphoserine: Ser920, Ser956, and Ser1028. 3 disordered regions span residues 1039–1081, 1116–1157, and 1209–1266; these read SSPT…KVNG, GLTV…ATAV, and KSDP…PQFV. Residues 1072-1081 are compositionally biased toward polar residues; sequence SNTTRSKVNG. Basic and acidic residues predominate over residues 1124–1136; sequence NRDHPGSKAHAEP. Ser1149 and Ser1151 each carry phosphoserine. A compositionally biased stretch (acidic residues) spans 1256–1266; sequence EDLEDEIPQFV. Residues 1263 to 1266 form an interaction with PTPN13/PTPL1 region; sequence PQFV.

As to quaternary structure, interacts with PTPN13/PTPL1. Interacts with RAP2A via its coiled coil domain. Interacts with RASIP1.

Functionally, GTPase activator for the Rho-type GTPases by converting them to an inactive GDP-bound state. Has strong activity toward RHOA, and weaker activity toward RAC1 and CDC42. May act as a specific effector of RAP2A to regulate Rho. In concert with RASIP1, suppresses RhoA signaling and dampens ROCK and MYH9 activities in endothelial cells and plays an essential role in blood vessel tubulogenesis. This is Rho GTPase-activating protein 29 (Arhgap29) from Mus musculus (Mouse).